A 346-amino-acid polypeptide reads, in one-letter code: Prepilin peptidase EppA (346 aa).

The next 10 helical transmembrane spans lie at 1–21, 31–51, 56–76, 77–97, 101–121, 128–148, 149–169, 182–202, 206–226, and 321–341; these read MFGF…LILT, IIPH…GYYF, AITS…GMGG, GDVK…IYFV, ISIL…TKIL, IIPS…ITEI, YSIG…IFIS, LGYI…AYFV, VLIS…VIYA, and PFVP…MGVI.

Belongs to the peptidase A24 family.

It localises to the cell membrane. Functionally, peptidase that processes the N-terminus of prepilins. Specifically cleaves proteins with a class III (type IV pilin-like) signal sequence, such as the major structural pilin EpdE and the minor pilins EpdA, EpdC and EpdD. Is not able to cleave the preflagellin subunit FlaB2. In Methanococcus maripaludis (strain DSM 14266 / JCM 13030 / NBRC 101832 / S2 / LL), this protein is Prepilin peptidase EppA.